Consider the following 432-residue polypeptide: Diaminopimelate decarboxylase (432 aa).

Lys66 carries the N6-(pyridoxal phosphate)lysine modification. Residues Gly248 and 290 to 293 (EPGR) contribute to the pyridoxal 5'-phosphate site. 3 residues coordinate substrate: Arg293, Arg330, and Tyr334. Cys361 (proton donor) is an active-site residue. Residues Glu362 and Tyr390 each coordinate substrate. Residue Tyr390 participates in pyridoxal 5'-phosphate binding.

It belongs to the Orn/Lys/Arg decarboxylase class-II family. LysA subfamily. In terms of assembly, homodimer. Pyridoxal 5'-phosphate serves as cofactor.

It carries out the reaction meso-2,6-diaminopimelate + H(+) = L-lysine + CO2. The protein operates within amino-acid biosynthesis; L-lysine biosynthesis via DAP pathway; L-lysine from DL-2,6-diaminopimelate: step 1/1. In terms of biological role, specifically catalyzes the decarboxylation of meso-diaminopimelate (meso-DAP) to L-lysine. The sequence is that of Diaminopimelate decarboxylase from Bacillus methanolicus.